The following is a 337-amino-acid chain: Ferredoxin--NADP reductase (337 aa).

7 residues coordinate FAD: Asp-35, Gln-43, Tyr-48, Ala-88, Phe-122, Asp-289, and Thr-330.

This sequence belongs to the ferredoxin--NADP reductase type 2 family. As to quaternary structure, homodimer. FAD is required as a cofactor.

The catalysed reaction is 2 reduced [2Fe-2S]-[ferredoxin] + NADP(+) + H(+) = 2 oxidized [2Fe-2S]-[ferredoxin] + NADPH. This Ehrlichia ruminantium (strain Gardel) protein is Ferredoxin--NADP reductase.